The chain runs to 748 residues: Tyrosine--tRNA ligase 2, cytoplasmic (748 aa).

Residue methionine 1 is modified to N-acetylmethionine. The 'HIGH' region motif lies at 441–449 (PSGRMHIAQ). L-tyrosine contacts are provided by tyrosine 564, glutamine 568, aspartate 571, and glutamine 586. The short motif at 623-627 (KMSKS) is the 'KMSKS' region element. ATP is bound at residue lysine 626.

It belongs to the class-I aminoacyl-tRNA synthetase family.

The protein localises to the cytoplasm. Its subcellular location is the cytosol. It carries out the reaction tRNA(Tyr) + L-tyrosine + ATP = L-tyrosyl-tRNA(Tyr) + AMP + diphosphate + H(+). Catalyzes the attachment of tyrosine to tRNA(Tyr) in a two-step reaction: tyrosine is first activated by ATP to form Tyr-AMP and then transferred to the acceptor end of tRNA(Tyr). The sequence is that of Tyrosine--tRNA ligase 2, cytoplasmic from Arabidopsis thaliana (Mouse-ear cress).